Consider the following 332-residue polypeptide: DGAT1/2-independent enzyme synthesizing storage lipids (332 aa).

The Lumenal segment spans residues 1–10 (MIGSNESSTE). Asn-5 carries an N-linked (GlcNAc...) asparagine glycan. The helical transmembrane segment at 11-31 (GPIPTSYLSFLAYLLGEWTGV) threads the bilayer. Topologically, residues 32–45 (EHTEDYLSYGAYLS) are cytoplasmic. Residues 46 to 66 (WVLFPLAIVFILPVAIFFFCF) form a helical membrane-spanning segment. At 67–332 (NTSLLLLHIY…ERFQTRQKED (266 aa)) the chain is on the lumenal side. The active site involves His-132. An N-linked (GlcNAc...) asparagine glycan is attached at Asn-289.

This sequence belongs to the diacylglycerol acyltransferase family. Highly divergent.

The protein resides in the endoplasmic reticulum membrane. The catalysed reaction is a 1,2-diacylglycerol + a 1,2-diacyl-sn-glycero-3-phosphocholine = a triacylglycerol + a 1-acyl-sn-glycero-3-phosphocholine. It catalyses the reaction a 1-O-alkyl-2-acyl-sn-glycero-3-phosphocholine + a 1,2-diacylglycerol = a 1-O-alkyl-sn-glycero-3-phosphocholine + a triacylglycerol. The enzyme catalyses a 2-acylglycerol + an acyl-CoA = a 1,2-diacylglycerol + CoA. It carries out the reaction an acyl-CoA + a 1,2-diacyl-sn-glycerol = a triacyl-sn-glycerol + CoA. The catalysed reaction is 2-(9Z-octadecenoyl)-glycerol + (9Z)-octadecenoyl-CoA = 1,2-di-(9Z-octadecenoyl)-glycerol + CoA. It catalyses the reaction 1,2-di-(9Z-octadecenoyl)-sn-glycerol + (9Z)-octadecenoyl-CoA = 1,2,3-tri-(9Z-octadecenoyl)-glycerol + CoA. In terms of biological role, catalytic subunit of the alternative triglyceride biosynthesis pathway, which mediates formation of triacylglycerol from diacylglycerol and membrane phospholipids. Synthesizes triacylglycerol at the expense of membrane phospholipids, such as phosphatidylcholine (PC) and its ether-linked form (ePC), thereby altering the composition of membranes. The alternative triglyceride biosynthesis pathway is probably required to provide the energy required for rapid growth when fuel sources are limiting. It maintains mitochondrial function during periods of extracellular lipid starvation. Can also use acyl-CoA as donor: acts as a acyl-CoA:monoacylglycerol acyltransferase (MGAT), but also shows acyl-CoA:diacylglycerol acyltransferase (DGAT) activity. This Gallus gallus (Chicken) protein is DGAT1/2-independent enzyme synthesizing storage lipids (TMEM68).